We begin with the raw amino-acid sequence, 264 residues long: Apolipoprotein A-I (264 aa).

The N-terminal stretch at 1-18 (MKAVVLAVALVFLTGSQA) is a signal peptide. A run of 2 repeats spans residues 67–88 (LNLLENWDTLGSTVSQLQERLG) and 89–110 (PLTRDFWDNLEKETDWVRQEMN). The interval 67–264 (LNLLENWDTL…DKASETLTAQ (198 aa)) is 10 X approximate tandem repeats. M109 carries the post-translational modification Methionine sulfoxide. The stretch at 111–121 (KDLEEVKQKVQ) is one 3; half-length repeat. 3 consecutive repeat copies span residues 122-143 (PYLDEFQKKWKEDVELYRQKVA), 144-165 (PLGAELQESARQKLQELQGRLS), and 166-187 (PVAEEFRDRMRTHVDSLRTQLA). A 7; truncated repeat occupies 188-207 (PHSEQMRESLAQRLAELKSN). At M193 the chain carries Methionine sulfoxide. Copy 8 of the repeat occupies 208–229 (PTLNEYHTRAKTHLKTLGEKAR). The stretch at 230-240 (PALEDLRHSLM) is one 9; half-length repeat. Residues M240 and M242 each carry the methionine sulfoxide modification. The stretch at 241 to 264 (PMLETLKTQVQSVIDKASETLTAQ) is repeat 10.

It belongs to the apolipoprotein A1/A4/E family. As to quaternary structure, homodimer. Interacts with APOA1BP and CLU. Component of a sperm activating protein complex (SPAP), consisting of APOA1, an immunoglobulin heavy chain, an immunoglobulin light chain and albumin. Interacts with NDRG1. Interacts with SCGB3A2. Interacts with NAXE and YJEFN3. Glycosylated. In terms of processing, palmitoylated. Post-translationally, may be acylated. Phosphorylation sites are present in the extracellular medium. In terms of tissue distribution, major protein of plasma HDL, also found in chylomicrons.

Its subcellular location is the secreted. Functionally, participates in the reverse transport of cholesterol from tissues to the liver for excretion by promoting cholesterol efflux from tissues and by acting as a cofactor for the lecithin cholesterol acyltransferase (LCAT). As part of the SPAP complex, activates spermatozoa motility. The sequence is that of Apolipoprotein A-I (Apoa1) from Mus musculus (Mouse).